Here is a 269-residue protein sequence, read N- to C-terminus: MKITSISVQQKNKERYNIFIDEKYNFSVDEEVLARYQLMKGKALTEAEIEEIKQADMVRKGLNKAINFLSHRVRSEKEIRDYLKKQEMEAFAIDEILKKLADMDYINDLEFAELYTKTQIKTTLKGPRTIERELVEKGLTREIISQVIEEYSDEAQLENATKQAIKIMKRNNKSAKKMLQQKIITDLIQKGYTSELAKTAATEATSEIDIADEADILQKQVEKTMRKNKRYKPSIAKQKTITSLMQKGFSYDTIQSYLTENEISFEEEE.

This sequence belongs to the RecX family.

The protein resides in the cytoplasm. Functionally, modulates RecA activity. The chain is Regulatory protein RecX from Listeria monocytogenes serotype 4a (strain HCC23).